We begin with the raw amino-acid sequence, 238 residues long: Large ribosomal subunit protein uL1 (238 aa).

Belongs to the universal ribosomal protein uL1 family. In terms of assembly, part of the 50S ribosomal subunit.

Binds directly to 23S rRNA. The L1 stalk is quite mobile in the ribosome, and is involved in E site tRNA release. Functionally, protein L1 is also a translational repressor protein, it controls the translation of the L11 operon by binding to its mRNA. This Saccharopolyspora erythraea (strain ATCC 11635 / DSM 40517 / JCM 4748 / NBRC 13426 / NCIMB 8594 / NRRL 2338) protein is Large ribosomal subunit protein uL1.